Consider the following 369-residue polypeptide: UDP-N-acetylglucosamine--N-acetylmuramyl-(pentapeptide) pyrophosphoryl-undecaprenol N-acetylglucosamine transferase (369 aa).

Residues 10-12 (TGG), Asn-124, Arg-166, Ser-196, and Gln-300 each bind UDP-N-acetyl-alpha-D-glucosamine.

This sequence belongs to the glycosyltransferase 28 family. MurG subfamily.

The protein resides in the cell membrane. The enzyme catalyses di-trans,octa-cis-undecaprenyl diphospho-N-acetyl-alpha-D-muramoyl-L-alanyl-D-glutamyl-meso-2,6-diaminopimeloyl-D-alanyl-D-alanine + UDP-N-acetyl-alpha-D-glucosamine = di-trans,octa-cis-undecaprenyl diphospho-[N-acetyl-alpha-D-glucosaminyl-(1-&gt;4)]-N-acetyl-alpha-D-muramoyl-L-alanyl-D-glutamyl-meso-2,6-diaminopimeloyl-D-alanyl-D-alanine + UDP + H(+). It participates in cell wall biogenesis; peptidoglycan biosynthesis. In terms of biological role, cell wall formation. Catalyzes the transfer of a GlcNAc subunit on undecaprenyl-pyrophosphoryl-MurNAc-pentapeptide (lipid intermediate I) to form undecaprenyl-pyrophosphoryl-MurNAc-(pentapeptide)GlcNAc (lipid intermediate II). The polypeptide is UDP-N-acetylglucosamine--N-acetylmuramyl-(pentapeptide) pyrophosphoryl-undecaprenol N-acetylglucosamine transferase (Desulfitobacterium hafniense (strain DSM 10664 / DCB-2)).